A 197-amino-acid chain; its full sequence is Protein GrpE (197 aa).

Residues M1 to P39 form a disordered region.

It belongs to the GrpE family. As to quaternary structure, homodimer.

The protein localises to the cytoplasm. Its function is as follows. Participates actively in the response to hyperosmotic and heat shock by preventing the aggregation of stress-denatured proteins, in association with DnaK and GrpE. It is the nucleotide exchange factor for DnaK and may function as a thermosensor. Unfolded proteins bind initially to DnaJ; upon interaction with the DnaJ-bound protein, DnaK hydrolyzes its bound ATP, resulting in the formation of a stable complex. GrpE releases ADP from DnaK; ATP binding to DnaK triggers the release of the substrate protein, thus completing the reaction cycle. Several rounds of ATP-dependent interactions between DnaJ, DnaK and GrpE are required for fully efficient folding. The protein is Protein GrpE of Escherichia coli O127:H6 (strain E2348/69 / EPEC).